Consider the following 137-residue polypeptide: Putative pre-16S rRNA nuclease (137 aa).

Belongs to the YqgF nuclease family.

Its subcellular location is the cytoplasm. In terms of biological role, could be a nuclease involved in processing of the 5'-end of pre-16S rRNA. The polypeptide is Putative pre-16S rRNA nuclease (Clostridium botulinum (strain Alaska E43 / Type E3)).